Consider the following 252-residue polypeptide: Small ribosomal subunit protein uS2 (252 aa).

It belongs to the universal ribosomal protein uS2 family. Component of the small ribosomal subunit. Mature ribosomes consist of a small (40S) and a large (60S) subunit. The 40S subunit contains about 33 different proteins and 1 molecule of RNA (18S). The 60S subunit contains about 49 different proteins and 3 molecules of RNA (25S, 5.8S and 5S). Interacts with RPS21.

It localises to the cytoplasm. Its function is as follows. Required for the assembly and/or stability of the 40S ribosomal subunit. Required for the processing of the 20S rRNA-precursor to mature 18S rRNA in a late step of the maturation of 40S ribosomal subunits. The sequence is that of Small ribosomal subunit protein uS2 from Encephalitozoon cuniculi (strain GB-M1) (Microsporidian parasite).